The primary structure comprises 71 residues: Long neurotoxin 1 (71 aa).

5 cysteine pairs are disulfide-bonded: cysteine 3-cysteine 21, cysteine 14-cysteine 42, cysteine 27-cysteine 31, cysteine 46-cysteine 57, and cysteine 58-cysteine 63.

It belongs to the three-finger toxin family. Long-chain subfamily. Type II alpha-neurotoxin sub-subfamily. Expressed by the venom gland.

It localises to the secreted. Its function is as follows. Binds with high affinity to muscular (alpha-1/CHRNA1) and neuronal (alpha-7/CHRNA7) nicotinic acetylcholine receptor (nAChR) and inhibits acetylcholine from binding to the receptor, thereby impairing neuromuscular and neuronal transmission. This Naja melanoleuca (Forest cobra) protein is Long neurotoxin 1.